The chain runs to 185 residues: Peptidyl-tRNA hydrolase (185 aa).

TRNA is bound at residue Y14. The Proton acceptor role is filled by H19. The tRNA site is built by Y64, N66, and N112.

It belongs to the PTH family. As to quaternary structure, monomer.

It localises to the cytoplasm. The catalysed reaction is an N-acyl-L-alpha-aminoacyl-tRNA + H2O = an N-acyl-L-amino acid + a tRNA + H(+). Hydrolyzes ribosome-free peptidyl-tRNAs (with 1 or more amino acids incorporated), which drop off the ribosome during protein synthesis, or as a result of ribosome stalling. Its function is as follows. Catalyzes the release of premature peptidyl moieties from peptidyl-tRNA molecules trapped in stalled 50S ribosomal subunits, and thus maintains levels of free tRNAs and 50S ribosomes. The chain is Peptidyl-tRNA hydrolase from Lactobacillus helveticus (strain DPC 4571).